Here is a 556-residue protein sequence, read N- to C-terminus: Arginine--tRNA ligase (556 aa).

Residues 132-142 carry the 'HIGH' region motif; it reads ANPTGDLHLGH.

This sequence belongs to the class-I aminoacyl-tRNA synthetase family. As to quaternary structure, monomer.

It localises to the cytoplasm. The enzyme catalyses tRNA(Arg) + L-arginine + ATP = L-arginyl-tRNA(Arg) + AMP + diphosphate. The protein is Arginine--tRNA ligase of Bacillus velezensis (strain DSM 23117 / BGSC 10A6 / LMG 26770 / FZB42) (Bacillus amyloliquefaciens subsp. plantarum).